An 89-amino-acid chain; its full sequence is Elongation factor 1-beta (89 aa).

This sequence belongs to the EF-1-beta/EF-1-delta family.

Functionally, promotes the exchange of GDP for GTP in EF-1-alpha/GDP, thus allowing the regeneration of EF-1-alpha/GTP that could then be used to form the ternary complex EF-1-alpha/GTP/AAtRNA. This Methanocaldococcus jannaschii (strain ATCC 43067 / DSM 2661 / JAL-1 / JCM 10045 / NBRC 100440) (Methanococcus jannaschii) protein is Elongation factor 1-beta (ef1b).